Here is a 481-residue protein sequence, read N- to C-terminus: Ankyrin repeat, SAM and basic leucine zipper domain-containing protein 1 (481 aa).

Over residues 1 to 16 (MASGGLRGLAVAGGGE) the composition is skewed to gly residues. The segment at 1–23 (MASGGLRGLAVAGGGESSDSEDD) is disordered. Phosphoserine occurs at positions 17, 18, and 20. ANK repeat units lie at residues 45–74 (EKNETFKKALTTGDISLVQELLDSGISVDS), 78–107 (YGWTPLMYAASIANVELVRVLLDRGANASF), 110–144 (DKQTILITACSARGSEEQILKCVELLLSRNADPNV), 148–177 (RLMTPIMYAARDGHPQVVAVLVAHGAEVNT), 181–210 (NGYTALTWAARQGHKNVVLKLLELGANKML), and 214–243 (DGKIPSEIAKRNKHLEIFNFLSLTLNPLEG). Positions 272 to 334 (SYTAFGDLEI…KILSALKELE (63 aa)) constitute an SAM domain.

As to quaternary structure, interacts with DDX4, PIWIL1, RANBP9 and TDRD1.

The protein resides in the cytoplasm. Functionally, plays a central role during spermatogenesis by repressing transposable elements and preventing their mobilization, which is essential for the germline integrity. Acts via the piRNA metabolic process, which mediates the repression of transposable elements during meiosis by forming complexes composed of piRNAs and Piwi proteins and governs the methylation and subsequent repression of transposons. Its association with pi-bodies suggests a participation in the primary piRNAs metabolic process. Required prior to the pachytene stage to facilitate the production of multiple types of piRNAs, including those associated with repeats involved in the regulation of retrotransposons. May act by mediating protein-protein interactions during germ cell maturation. The chain is Ankyrin repeat, SAM and basic leucine zipper domain-containing protein 1 (ASZ1) from Microcebus murinus (Gray mouse lemur).